Here is a 272-residue protein sequence, read N- to C-terminus: GPN-loop GTPase 3 (272 aa).

12–17 (GAGKST) lines the GTP pocket. Residues 69 to 71 (GPN) carry the Gly-Pro-Asn (GPN)-loop; involved in dimer interface motif. GTP is bound at residue 172-175 (SKMD). Residues 253–272 (QYGEDEEPKVPKDMDDGDFD) form a disordered region.

It belongs to the GPN-loop GTPase family. In terms of assembly, heterodimers with GPN1 or GPN2. Binds to RNA polymerase II (RNAPII).

Functionally, small GTPase required for proper nuclear import of RNA polymerase II and III (RNAPII and RNAPIII). May act at an RNAP assembly step prior to nuclear import. In Cryptococcus neoformans var. neoformans serotype D (strain JEC21 / ATCC MYA-565) (Filobasidiella neoformans), this protein is GPN-loop GTPase 3.